Reading from the N-terminus, the 164-residue chain is R-phycoerythrin alpha chain (164 aa).

Residues Asn47, Lys81, Cys82, Arg84, His88, Arg137, Cys139, and Arg142 each contribute to the (2R,3E)-phycoerythrobilin site.

Belongs to the phycobiliprotein family. In terms of assembly, heterododecamer of 6 alpha and 6 beta chains. The basic functional unit of phycobiliproteins is a ring-shaped hexamer formed from two back-to-back trimers contacting via the alpha chain subunits. The trimers are composed of alpha/beta subunit heterodimers arranged around a three-fold axis of symmetry. The phycoerythrins also contain a gamma subunit which is located in the center of the hexamer. In terms of processing, contains two covalently linked phycoerythrobilin chromophores.

It is found in the plastid. The protein resides in the chloroplast thylakoid membrane. Functionally, light-harvesting photosynthetic tetrapyrrole chromophore-protein from the phycobiliprotein complex. In Griffithsia monilis (Red alga), this protein is R-phycoerythrin alpha chain (cpeA).